Reading from the N-terminus, the 918-residue chain is MDFKETLLLPKTDFPMRGNLPANEPKKYKTWFDTNIYEQMKAKREGAELFTLHDGPPYANGDIHIGHALNKILKDIILKYNYFQGKAVRMTPGWDCHGLPIEQKVEEKLGKSKKEAMPTEKFRELCRAHAGKFVDIQRDEFKSLGVVADWENPYVTMDFKFEANIYRTLCEVAKRGLLVERHKPIFWSWAARTALADAEVEYEDKEDYSIYVHFELSDAAKEKLGLEGKAGLVIWTTTPWTLPANTGISINPDEMYVLTDDGHIVADARYDAMIEEGVVAGHASRKIAATELDGLLAINPLNERPSKVVLGEHVMMDGGTGCVHTAPGHGEDDYKVGLENGLEVVMPVDERGCYDESVVGLDLLPDAEKFVGMHIFKANEPILELLGDNLLKVSKFTHSYPHCWRTKKPLIYRATNQWFISIDDAAKGSDKTLREAAVDAIDSVDFYPASSKNRLKPMVEGRPDWCISRQRSWGVPIAFFRVKSTKAVIFDEDVLEHVASLFDEHGADAWYSMSIAELLPAGSKYDPADLEKIEDILDVWFDSGSTWNSVLSSGNYDAGNYPASLYLEGSDQHRGWFQSSLLLSSAINGIAPYETIITHGFTMDAKGEKMSKSKGNVVAPEKVVKQFGSEILRLWVALSDYQNDQKISDDILKQTAEQYRKIRNTFRFLLANVNDLDALVSADAYGELDRWILNKADDVFASVKESFETYDFLKGFATLNHFITNELSGIYMDVTKDRLYCEAKDSDVRRATQSAMALISKAMLGLIAPVLTYTADEILAYAPAIFKGDIENVFDLVYEAVPETAASFDDAILLEAREKFSEAIDSLKKEKVIKATLELEIAGDRDLLPISDDKDLEDWFVVSAVKESSKGEQVASFKVEGRTFTVHKAMMAKCPRCWRFTSTSEDCLCERCAKVVGA.

A 'HIGH' region motif is present at residues proline 57 to histidine 67. Glutamate 568 is an L-isoleucyl-5'-AMP binding site. The 'KMSKS' region signature appears at lysine 609–serine 613. ATP is bound at residue lysine 612. Residues cysteine 894, cysteine 897, cysteine 909, and cysteine 912 each coordinate Zn(2+).

The protein belongs to the class-I aminoacyl-tRNA synthetase family. IleS type 1 subfamily. As to quaternary structure, monomer. Requires Zn(2+) as cofactor.

Its subcellular location is the cytoplasm. It catalyses the reaction tRNA(Ile) + L-isoleucine + ATP = L-isoleucyl-tRNA(Ile) + AMP + diphosphate. In terms of biological role, catalyzes the attachment of isoleucine to tRNA(Ile). As IleRS can inadvertently accommodate and process structurally similar amino acids such as valine, to avoid such errors it has two additional distinct tRNA(Ile)-dependent editing activities. One activity is designated as 'pretransfer' editing and involves the hydrolysis of activated Val-AMP. The other activity is designated 'posttransfer' editing and involves deacylation of mischarged Val-tRNA(Ile). The sequence is that of Isoleucine--tRNA ligase from Sulfurovum sp. (strain NBC37-1).